The following is a 204-amino-acid chain: MKTTVGSRPNKYWPIVAGIGVVGLFAYLIFSNQKHSTESGDNIHKFANGGSYRDGSKSISYNRNHPFAYGNASSPGMLLPAMLTIIGIISYLWRTRDSVLGDSGGNNSCGEDCQGECLNGHSRRSLLCDIGXSFYHCSMAIVYISKQYTYGDWSLLLSRSELCEDLWNRGYEPRSYCGHPPLAEVPFWGISDVGRFNQCFEYSS.

Residues 1 to 11 (MKTTVGSRPNK) lie on the Cytoplasmic side of the membrane. A helical membrane pass occupies residues 12–32 (YWPIVAGIGVVGLFAYLIFSN). Over 33-72 (QKHSTESGDNIHKFANGGSYRDGSKSISYNRNHPFAYGNA) the chain is Lumenal. A helical membrane pass occupies residues 73–93 (SSPGMLLPAMLTIIGIISYLW). The Cytoplasmic portion of the chain corresponds to 94–204 (RTRDSVLGDS…RFNQCFEYSS (111 aa)).

Belongs to the virgaviridae/benyvirus TGB2 movement protein family. As to quaternary structure, interacts with movement protein TGB3. TGB1-TGB3-TGB2 complex formation is enhanced by ATP hydrolysis.

It localises to the host cell junction. The protein resides in the host plasmodesma. The protein localises to the host endoplasmic reticulum membrane. Its subcellular location is the host cytoplasm. It is found in the host cytoskeleton. Participates in the transport of viral genome to neighboring plant cells directly through plasmodesmata, without any budding. TGBp2 and TGBp3 are necessary for intracellular delivery of TGBp1-containing vRNPs to plasmodesmata. Can gate plasmodesmata and increase their size exclusion limit. To a lesser extent than TGB3, induces host actin cytoskeleton network thickening, which probably plays a major role in virus cell-to-cell movement. This chain is Movement protein TGB2, found in Barley stripe mosaic virus (BSMV).